The primary structure comprises 493 residues: Accumulates dyads protein 4 (493 aa).

As to quaternary structure, interacts with CNM67, SPO21/MPC70 and NUD1.

The protein localises to the cytoplasm. It localises to the cytoskeleton. Its subcellular location is the microtubule organizing center. It is found in the spindle pole body. Functionally, involved in the pathway that organizes the shaping and sizing of the prospore membrane (PSM) during sporulation. May be required to stabilize the outer plaque of the spindle pole body (SPB). The sequence is that of Accumulates dyads protein 4 (ADY4) from Saccharomyces cerevisiae (strain ATCC 204508 / S288c) (Baker's yeast).